The sequence spans 432 residues: MKKGMKVSLSVAAAALLMSAPAAFAFHSGGVAECEGCHTMHNSLGGAVMNSATAQFTTGPMLLQGATQSSSCLNCHQHAGDTGPSSYHISTAEADMPAGTAPLQMTPGGDFGWVKKTYTWNVRGLNTSEGERKGHNIVAGDYNYVADTTLTTAPGGTYPANQLHCSSCHDPHGKYRRFVDGSIATTGLPIKNSGSYQNSNDPTAWGAVGAYRILGGTGYQPKSLSGSYAFANQVPAAVAPSTYNRTEATTQTRVAYGQGMSEWCANCHTDIHNSAYPTNLRHPAGNGAKFGATIAGLYNSYKKSGDLTGTQASAYLSLAPFEEGTADYTVLKGHAKIDDTALTGADATSNVNCLSCHRAHASGFDSMTRFNLAYEFTTIADASGNSIYGTDPNTSSLQGRSVNEMTAAYYGRTADKFAPYQRALCNKCHAKD.

An N-terminal signal peptide occupies residues 1–25; the sequence is MKKGMKVSLSVAAAALLMSAPAAFA.

Heme serves as cofactor.

It is found in the cell outer membrane. It localises to the cell surface. Plays an important role in extracellular electron transfer. Can transfer electrons to insoluble Fe(3+) oxides as well as other extracellular electron acceptors, including Mn(4+) oxide and humic substances. Essential for direct interspecies electron transfer (DIET) in cocultures with G.metallireducens. This Geobacter sulfurreducens (strain ATCC 51573 / DSM 12127 / PCA) protein is C-type cytochrome OmcS.